Here is a 255-residue protein sequence, read N- to C-terminus: Taurine import ATP-binding protein TauB (255 aa).

Positions 2 to 229 (LQISHLYADY…RFVAGESSRS (228 aa)) constitute an ABC transporter domain. 34–41 (GPSGCGKT) lines the ATP pocket.

Belongs to the ABC transporter superfamily. Taurine importer (TC 3.A.1.17.1) family. The complex is composed of two ATP-binding proteins (TauB), two transmembrane proteins (TauC) and a solute-binding protein (TauA).

It localises to the cell inner membrane. The catalysed reaction is taurine(out) + ATP + H2O = taurine(in) + ADP + phosphate + H(+). Functionally, part of the ABC transporter complex TauABC involved in taurine import. Responsible for energy coupling to the transport system. This is Taurine import ATP-binding protein TauB from Shigella flexneri.